The primary structure comprises 208 residues: MARYRGAVERLERRFGVSLALKGERRLSGKSALDKRAYGPGQHGQRRAKTSDYGLQLKEKQKAKMMYGISEKQFRSIFVEANRLDGNTGENLIRLIERRLDNVVYRMGFATTRSSARQLVTHGHVLVDGKRLDIPSYFVRSGQKIEIKEKTKSNPQVVRAMELTAQTGIVPWIDVEKDKKYGIFTRYPEREEVVVPIEERLIVELYSK.

The 64-residue stretch at 98 to 161 (RRLDNVVYRM…KSNPQVVRAM (64 aa)) folds into the S4 RNA-binding domain.

It belongs to the universal ribosomal protein uS4 family. Part of the 30S ribosomal subunit. Contacts protein S5. The interaction surface between S4 and S5 is involved in control of translational fidelity.

One of the primary rRNA binding proteins, it binds directly to 16S rRNA where it nucleates assembly of the body of the 30S subunit. Functionally, with S5 and S12 plays an important role in translational accuracy. This is Small ribosomal subunit protein uS4 from Helicobacter acinonychis (strain Sheeba).